The following is a 142-amino-acid chain: MTTFNLTIVSAENKIFEGAVKSVQATGIEGELGILAGHTPLLTAIKPGIVKFTYNDGIEEVIYVSGGFLEIQPNIVTVLADVAIRGSDLDQDRILAAKKKAEDNIVAKSGDLNHEMLTAKLSKELAKLRAYELTEKLVKNKR.

This sequence belongs to the ATPase epsilon chain family. In terms of assembly, F-type ATPases have 2 components, CF(1) - the catalytic core - and CF(0) - the membrane proton channel. CF(1) has five subunits: alpha(3), beta(3), gamma(1), delta(1), epsilon(1). CF(0) has three main subunits: a, b and c.

The protein resides in the cell inner membrane. Produces ATP from ADP in the presence of a proton gradient across the membrane. This Mannheimia succiniciproducens (strain KCTC 0769BP / MBEL55E) protein is ATP synthase epsilon chain.